Here is a 1412-residue protein sequence, read N- to C-terminus: uncharacterized protein (1412 aa).

The tract at residues 1–22 (MESINVVNSVEDLPGFNPDENV) is disordered. 2 coiled-coil regions span residues 317–377 (NNDF…ILRH) and 732–800 (SKEA…SDDE). The interval 778–808 (SRKRKHEDIVKEHEAEKRDSDDEDDFEEVDV) is disordered. Residues 783–797 (HEDIVKEHEAEKRDS) are compositionally biased toward basic and acidic residues. A compositionally biased stretch (acidic residues) spans 798-808 (DDEDDFEEVDV).

This is an uncharacterized protein from Magallana gigas (Pacific oyster).